Here is an 87-residue protein sequence, read N- to C-terminus: Homeotic protein ultrabithorax (87 aa).

The Antp-type hexapeptide signature appears at 22-27 (FYPWMA).

Belongs to the Antp homeobox family. In the embryo, expression is seen in the epidermis, somatic and visceral mesoderm, and the peripheral and central nervous system.

The protein localises to the nucleus. Functionally, sequence-specific transcription factor which is part of a developmental regulatory system that provides cells with specific positional identities on the anterior-posterior axis. Binds the consensus region 5'-TTAAT[GT][GA]-3'. This homeotic protein controls development of the cells in the posterior thoracic and first abdominal segments. It activates the synthesis of the decapentaplegic (DPP) growth factor. This chain is Homeotic protein ultrabithorax (Ubx), found in Drosophila virilis (Fruit fly).